The chain runs to 790 residues: Centrosomal protein of 78 kDa (790 aa).

5 disordered regions span residues 325-345, 362-385, 428-462, 654-732, and 756-790; these read YQWVTSPSSKEPSKTAKQRKK, GLATKKPSSNGRKQGLGKDCYAPN, VTVTVESPSSSETDETEDSSESVQEAPQKTSIKEE, AKTG…LNEP, and KTIKSKPNLLEHSESDTLGSDFELQERVHSSAHLT. S330 and S332 each carry phosphoserine. The segment covering 428-438 has biased composition (low complexity); it reads VTVTVESPSSS. Residues 455 to 510 are a coiled coil; the sequence is QKTSIKEETLQEKLEECLRQLKEERVIRLKADKRVSELEHENAQLRNINFSLSEAL. 2 stretches are compositionally biased toward basic and acidic residues: residues 693–708 and 721–732; these read PSRRPSAERHPRKDLL and GPGDRRSLLNEP.

The protein belongs to the CEP78 family. Interacts with PLK4. Interacts with FAM161A. Interacts with IFT20; regulating IFT20 stability and localization. Interacts with TTC21A; regulating TTC21A stability and localization. Interacts with USP16; promoting USP16-dependent deubiquitination of tektins. Interacts with DCAF1/VPRBP; promoting localization of the EDVP complex to centrosomes. Interacts with CEP350; promoting CEP78 localization to centrosome and centriole. In terms of tissue distribution, expressed by photoreceptor cells in the retina.

It localises to the cytoplasm. The protein resides in the cytoskeleton. It is found in the microtubule organizing center. The protein localises to the centrosome. Its subcellular location is the centriole. It localises to the cilium basal body. Functionally, centriole wall protein that localizes to mature centrioles and regulates centriole and cilia biogenesis. Involved in centrosome duplication: required for efficient PLK4 centrosomal localization and PLK4-induced overduplication of centrioles. Involved in cilium biogenesis and controls cilium length. Acts as a regulator of protein stability by preventing ubiquitination of centrosomal proteins, such as CCP110 and tektins. Associates with the EDVP complex, preventing ubiquitination and degradation of CCP110. Promotes deubiquitination of tektin proteins (TEKT1, TEKT2, TEK3, TEKT4 and TEKT5) via its interaction with USP16. This is Centrosomal protein of 78 kDa from Mus musculus (Mouse).